A 130-amino-acid chain; its full sequence is Sulfurtransferase TusD (130 aa).

Catalysis depends on Cys78, which acts as the Cysteine persulfide intermediate.

This sequence belongs to the DsrE/TusD family. In terms of assembly, heterohexamer, formed by a dimer of trimers. The hexameric TusBCD complex contains 2 copies each of TusB, TusC and TusD. The TusBCD complex interacts with TusE.

The protein localises to the cytoplasm. Part of a sulfur-relay system required for 2-thiolation of 5-methylaminomethyl-2-thiouridine (mnm(5)s(2)U) at tRNA wobble positions. Accepts sulfur from TusA and transfers it in turn to TusE. The chain is Sulfurtransferase TusD from Buchnera aphidicola subsp. Baizongia pistaciae (strain Bp).